Here is a 520-residue protein sequence, read N- to C-terminus: 2-isopropylmalate synthase (520 aa).

The Pyruvate carboxyltransferase domain occupies 12–274; that stretch reads VLIFDTTLRD…TTGIDTTQIM (263 aa). Mn(2+) contacts are provided by Asp-21, His-209, His-211, and Asn-245. A regulatory domain region spans residues 398 to 520; the sequence is RLLSLTVIAG…RLHAQHAAAE (123 aa).

This sequence belongs to the alpha-IPM synthase/homocitrate synthase family. LeuA type 1 subfamily. In terms of assembly, homodimer. It depends on Mn(2+) as a cofactor.

It is found in the cytoplasm. The catalysed reaction is 3-methyl-2-oxobutanoate + acetyl-CoA + H2O = (2S)-2-isopropylmalate + CoA + H(+). It participates in amino-acid biosynthesis; L-leucine biosynthesis; L-leucine from 3-methyl-2-oxobutanoate: step 1/4. Catalyzes the condensation of the acetyl group of acetyl-CoA with 3-methyl-2-oxobutanoate (2-ketoisovalerate) to form 3-carboxy-3-hydroxy-4-methylpentanoate (2-isopropylmalate). The sequence is that of 2-isopropylmalate synthase from Methylobacterium nodulans (strain LMG 21967 / CNCM I-2342 / ORS 2060).